The sequence spans 236 residues: Purine nucleoside phosphorylase (236 aa).

Histidine 5 contributes to the a purine D-ribonucleoside binding site. Phosphate contacts are provided by residues glycine 21, arginine 25, arginine 43, and 86-89 (RYGT). A purine D-ribonucleoside contacts are provided by residues glutamate 163, 180-182 (EME), and 204-205 (SD).

Belongs to the PNP/UDP phosphorylase family. In terms of assembly, homohexamer; disulfide-linked. Trimer of homodimers, with three symmetric intersubunit disulfide bonds linking the dimers to one another.

It catalyses the reaction S-methyl-5'-thioadenosine + phosphate = 5-(methylsulfanyl)-alpha-D-ribose 1-phosphate + adenine. The enzyme catalyses a purine D-ribonucleoside + phosphate = a purine nucleobase + alpha-D-ribose 1-phosphate. The catalysed reaction is a purine 2'-deoxy-D-ribonucleoside + phosphate = a purine nucleobase + 2-deoxy-alpha-D-ribose 1-phosphate. Its pathway is purine metabolism; purine nucleoside salvage. Cleavage of guanosine or inosine to respective bases and sugar-1-phosphate molecules. Cleaves inosine, guanosine, and adenosine with a better efficiency than MTA. In Saccharolobus solfataricus (strain ATCC 35092 / DSM 1617 / JCM 11322 / P2) (Sulfolobus solfataricus), this protein is Purine nucleoside phosphorylase.